We begin with the raw amino-acid sequence, 181 residues long: Large ribosomal subunit protein uL5 (181 aa).

Belongs to the universal ribosomal protein uL5 family. Part of the 50S ribosomal subunit; part of the 5S rRNA/L5/L18/L25 subcomplex. Contacts the 5S rRNA and the P site tRNA. Forms a bridge to the 30S subunit in the 70S ribosome.

This is one of the proteins that bind and probably mediate the attachment of the 5S RNA into the large ribosomal subunit, where it forms part of the central protuberance. In the 70S ribosome it contacts protein S13 of the 30S subunit (bridge B1b), connecting the 2 subunits; this bridge is implicated in subunit movement. Contacts the P site tRNA; the 5S rRNA and some of its associated proteins might help stabilize positioning of ribosome-bound tRNAs. This Helicobacter pylori (strain P12) protein is Large ribosomal subunit protein uL5.